Here is a 117-residue protein sequence, read N- to C-terminus: Large ribosomal subunit protein bL19 (117 aa).

Belongs to the bacterial ribosomal protein bL19 family.

Its function is as follows. This protein is located at the 30S-50S ribosomal subunit interface and may play a role in the structure and function of the aminoacyl-tRNA binding site. In Proteus mirabilis (strain HI4320), this protein is Large ribosomal subunit protein bL19.